The chain runs to 365 residues: Aminomethyltransferase (365 aa).

This sequence belongs to the GcvT family. The glycine cleavage system is composed of four proteins: P, T, L and H.

The catalysed reaction is N(6)-[(R)-S(8)-aminomethyldihydrolipoyl]-L-lysyl-[protein] + (6S)-5,6,7,8-tetrahydrofolate = N(6)-[(R)-dihydrolipoyl]-L-lysyl-[protein] + (6R)-5,10-methylene-5,6,7,8-tetrahydrofolate + NH4(+). Its function is as follows. The glycine cleavage system catalyzes the degradation of glycine. This Parafrankia sp. (strain EAN1pec) protein is Aminomethyltransferase.